The following is a 511-amino-acid chain: Maturase K (511 aa).

Belongs to the intron maturase 2 family. MatK subfamily.

Its subcellular location is the plastid. It localises to the chloroplast. Its function is as follows. Usually encoded in the trnK tRNA gene intron. Probably assists in splicing its own and other chloroplast group II introns. This chain is Maturase K, found in Maihuenia poeppigii (Hardy cactus).